Consider the following 360-residue polypeptide: MSLTRLNIEAFRNIQSAQLIPAPGINLIYGQNGSGKTSILEAIYFLGMGRSFRSHLSQRVINNDDDKLTLFATLNLARGDSKIGLRRFRSGETEVRIDGEKVKRLSTLAETLPIQVITPESFSLLFEGPKSRRQFIDWGAFHADPLFYGAWTNVRRVLKQRNQLLRNGSSYSNIQFWDQEFVRYAEQVTEIRNHYVDSLNELLKGIIGEFLPSVDVKVSFTRGWDSKTDFAELLENQYSRDLATGHTVSGPHKADLRLRVGTLPAQDALSRGQLKLLVCALRIAQGKLLKQQIDKHSIYLVDDLPSELDAQHRQLLLKQLTDTGAQVFVTAIDPAAIVDSLHTPPSRMFHVEQGRVTVIE.

30-37 (GQNGSGKT) is a binding site for ATP.

It belongs to the RecF family.

The protein localises to the cytoplasm. Its function is as follows. The RecF protein is involved in DNA metabolism; it is required for DNA replication and normal SOS inducibility. RecF binds preferentially to single-stranded, linear DNA. It also seems to bind ATP. In Shewanella baltica (strain OS185), this protein is DNA replication and repair protein RecF.